A 348-amino-acid polypeptide reads, in one-letter code: uncharacterized protein (348 aa).

The segment covering 1–11 (MTNPQGPPNDP) has biased composition (pro residues). Residues 1–83 (MTNPQGPPND…RSGRQAAHQA (83 aa)) form a disordered region. 2 consecutive transmembrane segments (helical) span residues 111-131 (LTVF…LIGG) and 235-255 (IPIL…DGTV).

The protein localises to the cell membrane. This is an uncharacterized protein from Mycobacterium tuberculosis (strain CDC 1551 / Oshkosh).